The chain runs to 460 residues: ATP synthase subunit beta (460 aa).

148 to 155 (GGAGVGKT) contacts ATP.

The protein belongs to the ATPase alpha/beta chains family. F-type ATPases have 2 components, CF(1) - the catalytic core - and CF(0) - the membrane proton channel. CF(1) has five subunits: alpha(3), beta(3), gamma(1), delta(1), epsilon(1). CF(0) has three main subunits: a(1), b(2) and c(9-12). The alpha and beta chains form an alternating ring which encloses part of the gamma chain. CF(1) is attached to CF(0) by a central stalk formed by the gamma and epsilon chains, while a peripheral stalk is formed by the delta and b chains.

It localises to the cell inner membrane. The enzyme catalyses ATP + H2O + 4 H(+)(in) = ADP + phosphate + 5 H(+)(out). Produces ATP from ADP in the presence of a proton gradient across the membrane. The catalytic sites are hosted primarily by the beta subunits. The sequence is that of ATP synthase subunit beta from Alcanivorax borkumensis (strain ATCC 700651 / DSM 11573 / NCIMB 13689 / SK2).